A 239-amino-acid chain; its full sequence is Fatty acid metabolism regulator protein (239 aa).

Residues 6 to 74 enclose the HTH gntR-type domain; sequence QSPAGFAEEY…HGKPTKINNF (69 aa). The H-T-H motif DNA-binding region spans 34–53; the sequence is ERELSELIGVTRTTLREVLQ.

Homodimer.

It localises to the cytoplasm. In terms of biological role, multifunctional regulator of fatty acid metabolism. This Pectobacterium carotovorum subsp. carotovorum (strain PC1) protein is Fatty acid metabolism regulator protein.